We begin with the raw amino-acid sequence, 295 residues long: Large ribosomal subunit protein uL18 (295 aa).

The span at 251 to 261 (PTPKKKTDFAG) shows a compositional bias: basic and acidic residues. Residues 251 to 295 (PTPKKKTDFAGKTKRWNRKKMTFSQRRDRVKQKKASFLRAKQQEG) form a disordered region. The span at 262 to 271 (KTKRWNRKKM) shows a compositional bias: basic residues.

Belongs to the universal ribosomal protein uL18 family. Component of the large ribosomal subunit (LSU).

It localises to the cytoplasm. The protein resides in the nucleus. In terms of biological role, component of the ribosome, a large ribonucleoprotein complex responsible for the synthesis of proteins in the cell. The small ribosomal subunit (SSU) binds messenger RNAs (mRNAs) and translates the encoded message by selecting cognate aminoacyl-transfer RNA (tRNA) molecules. The large subunit (LSU) contains the ribosomal catalytic site termed the peptidyl transferase center (PTC), which catalyzes the formation of peptide bonds, thereby polymerizing the amino acids delivered by tRNAs into a polypeptide chain. The nascent polypeptides leave the ribosome through a tunnel in the LSU and interact with protein factors that function in enzymatic processing, targeting, and the membrane insertion of nascent chains at the exit of the ribosomal tunnel. The protein is Large ribosomal subunit protein uL18 (RPL5) of Styela clava (Sea squirt).